The sequence spans 465 residues: Cysteine--tRNA ligase (465 aa).

Residue Cys27 participates in Zn(2+) binding. Residues 29-39 (PTVYNFFHIGN) carry the 'HIGH' region motif. Zn(2+) contacts are provided by Cys207, His232, and Glu236. Positions 264 to 268 (KMSKS) match the 'KMSKS' region motif. Position 267 (Lys267) interacts with ATP.

This sequence belongs to the class-I aminoacyl-tRNA synthetase family. In terms of assembly, monomer. Requires Zn(2+) as cofactor.

The protein localises to the cytoplasm. It carries out the reaction tRNA(Cys) + L-cysteine + ATP = L-cysteinyl-tRNA(Cys) + AMP + diphosphate. The protein is Cysteine--tRNA ligase of Clostridium botulinum (strain Kyoto / Type A2).